The following is a 435-amino-acid chain: Mitochondrial association factor 1 form b0 (435 aa).

A signal peptide spans 1 to 27 (MWRIWRCRLSFLFVTGCLLGALTAGLG). Residues 28–96 (SQMSDSVGRN…VTARRRRNRR (69 aa)) lie on the Vacuolar side of the membrane. The segment at 43-89 (GVADASQEAGDVVEERTERTEEQVFAPGPPRRHSSESLFPRNPSVTA) is disordered. Over residues 55 to 64 (VEERTERTEE) the composition is skewed to basic and acidic residues. The chain crosses the membrane as a helical span at residues 97–117 (ITLIATAVGVAVILAALYVLR). Residues 118–435 (RRRAQPPQEP…ESTYLASMLD (318 aa)) are Cytoplasmic-facing. Residues 120 to 162 (RAQPPQEPEPPTRLRTPRPRAPSGQQQPSESEPPAGVPMKPGS) are disordered.

Its subcellular location is the parasitophorous vacuole membrane. Its function is as follows. During host cell infection by tachyzoites, does not play a role in tethering the parasitophorous vacuole to the host mitochondria. This chain is Mitochondrial association factor 1 form b0, found in Toxoplasma gondii.